Here is a 173-residue protein sequence, read N- to C-terminus: RNA polymerase sigma factor TcsR (173 aa).

Residues 122–169 (IKDLTQNEKNIIRKIYLDRLRESEISRELNISRQAVNKTHLRALEKLK) form a sigma-70 factor domain-4 region. Residues 143-162 (ESEISRELNISRQAVNKTHL) constitute a DNA-binding region (H-T-H motif).

The protein belongs to the sigma-70 factor family.

Sigma factors are initiation factors that promote the attachment of RNA polymerase to specific initiation sites and are then released. Transcriptional regulator specifically required to activate expression of the toxin gene locus, composed of tcsL, tcsH and tcdE/utxA. The chain is RNA polymerase sigma factor TcsR from Paraclostridium sordellii (Clostridium sordellii).